The sequence spans 522 residues: Cytochrome P450 9c1 (522 aa).

Position 464 (C464) interacts with heme.

This sequence belongs to the cytochrome P450 family. Heme is required as a cofactor.

The protein localises to the endoplasmic reticulum membrane. Its subcellular location is the microsome membrane. In terms of biological role, may be involved in the metabolism of insect hormones and in the breakdown of synthetic insecticides. In Drosophila melanogaster (Fruit fly), this protein is Cytochrome P450 9c1 (Cyp9c1).